A 290-amino-acid polypeptide reads, in one-letter code: D-tagatose-1,6-bisphosphate aldolase subunit KbaY (290 aa).

Aspartate 82 serves as the catalytic Proton donor. Zn(2+) contacts are provided by histidine 83 and histidine 180. A dihydroxyacetone phosphate-binding site is contributed by glycine 181. Residue histidine 208 coordinates Zn(2+). Dihydroxyacetone phosphate contacts are provided by residues 209–211 and 230–233; these read GAS and NVAT.

Belongs to the class II fructose-bisphosphate aldolase family. TagBP aldolase KbaY subfamily. In terms of assembly, homotetramer. Forms a complex with KbaZ. Zn(2+) serves as cofactor.

It carries out the reaction D-tagatofuranose 1,6-bisphosphate = D-glyceraldehyde 3-phosphate + dihydroxyacetone phosphate. It participates in carbohydrate metabolism; D-tagatose 6-phosphate degradation; D-glyceraldehyde 3-phosphate and glycerone phosphate from D-tagatose 6-phosphate: step 2/2. Catalytic subunit of the tagatose-1,6-bisphosphate aldolase KbaYZ, which catalyzes the reversible aldol condensation of dihydroxyacetone phosphate (DHAP or glycerone-phosphate) with glyceraldehyde 3-phosphate (G3P) to produce tagatose 1,6-bisphosphate (TBP). Requires KbaZ subunit for full activity and stability. This is D-tagatose-1,6-bisphosphate aldolase subunit KbaY from Citrobacter koseri (strain ATCC BAA-895 / CDC 4225-83 / SGSC4696).